Consider the following 97-residue polypeptide: Eclosion hormone (97 aa).

Residues 1-17 form the signal peptide; the sequence is MNCKPLILCTFVAVAMC. Intrachain disulfides connect Cys-48/Cys-72, Cys-52/Cys-68, and Cys-55/Cys-83.

The protein belongs to the insect eclosion hormone family. As to expression, expressed in a single pair of brain neurons which extend their processes the entire length of the central nervous system and also to the corpora cardiaca portion of the ring gland. These cells show massive depletion of immunoreactive Eh at ecdysis.

It is found in the secreted. Functionally, neuropeptide that triggers the performance of ecdysis behaviors at the end of a molt. It triggers adult behavior patterns: larval, pupal and adult ecdysis, and plasticization during the molt. This chain is Eclosion hormone (Eh), found in Drosophila melanogaster (Fruit fly).